The following is a 341-amino-acid chain: tRNA N6-adenosine threonylcarbamoyltransferase (341 aa).

Fe cation-binding residues include histidine 111 and histidine 115. Substrate is bound by residues leucine 134–glycine 138, aspartate 167, glycine 180, and asparagine 276. Position 304 (aspartate 304) interacts with Fe cation.

Belongs to the KAE1 / TsaD family. Fe(2+) is required as a cofactor.

Its subcellular location is the cytoplasm. It carries out the reaction L-threonylcarbamoyladenylate + adenosine(37) in tRNA = N(6)-L-threonylcarbamoyladenosine(37) in tRNA + AMP + H(+). Required for the formation of a threonylcarbamoyl group on adenosine at position 37 (t(6)A37) in tRNAs that read codons beginning with adenine. Is involved in the transfer of the threonylcarbamoyl moiety of threonylcarbamoyl-AMP (TC-AMP) to the N6 group of A37, together with TsaE and TsaB. TsaD likely plays a direct catalytic role in this reaction. The protein is tRNA N6-adenosine threonylcarbamoyltransferase of Pseudomonas paraeruginosa (strain DSM 24068 / PA7) (Pseudomonas aeruginosa (strain PA7)).